The chain runs to 947 residues: Protein translocase subunit SecA (947 aa).

Residues Gln87, 105–109 (GEGKT), and Asp494 contribute to the ATP site. The segment at 860–947 (TAPKPLPTQE…NRAPKSKRKR (88 aa)) is disordered. The span at 870–885 (AAARTTGTAAPTALRA) shows a compositional bias: low complexity. Composition is skewed to basic and acidic residues over residues 903–914 (EDGKAKATRDSA) and 922–931 (ASRRERREAA).

The protein belongs to the SecA family. In terms of assembly, monomer and homodimer. Part of the essential Sec protein translocation apparatus which comprises SecA, SecYEG and auxiliary proteins SecDF. Other proteins may also be involved.

The protein resides in the cell membrane. It is found in the cytoplasm. The catalysed reaction is ATP + H2O + cellular proteinSide 1 = ADP + phosphate + cellular proteinSide 2.. Part of the Sec protein translocase complex. Interacts with the SecYEG preprotein conducting channel. Has a central role in coupling the hydrolysis of ATP to the transfer of proteins into and across the cell membrane, serving as an ATP-driven molecular motor driving the stepwise translocation of polypeptide chains across the membrane. The sequence is that of Protein translocase subunit SecA from Rhodococcus erythropolis (strain PR4 / NBRC 100887).